A 416-amino-acid chain; its full sequence is Glutamate dehydrogenase (416 aa).

K105 is a catalytic residue.

Belongs to the Glu/Leu/Phe/Val dehydrogenases family. Homohexamer.

The catalysed reaction is L-glutamate + NAD(+) + H2O = 2-oxoglutarate + NH4(+) + NADH + H(+). The enzyme catalyses L-glutamate + NADP(+) + H2O = 2-oxoglutarate + NH4(+) + NADPH + H(+). The polypeptide is Glutamate dehydrogenase (gdhA) (Thermotoga maritima (strain ATCC 43589 / DSM 3109 / JCM 10099 / NBRC 100826 / MSB8)).